We begin with the raw amino-acid sequence, 439 residues long: Xylose isomerase (439 aa).

Catalysis depends on residues H101 and D104. Mg(2+)-binding residues include E232, E268, H271, D296, D307, D309, and D339.

Belongs to the xylose isomerase family. In terms of assembly, homotetramer. Mg(2+) serves as cofactor.

The protein localises to the cytoplasm. It carries out the reaction alpha-D-xylose = alpha-D-xylulofuranose. This Lactococcus lactis subsp. lactis (strain IL1403) (Streptococcus lactis) protein is Xylose isomerase (xylA).